A 291-amino-acid chain; its full sequence is Phosphatidylglycerol--prolipoprotein diacylglyceryl transferase (291 aa).

The next 7 helical transmembrane spans lie at 21–41 (VSLH…MWLA), 60–80 (LLYA…VLFY), 96–116 (WDGG…MIIF), 130–150 (FIAP…FING), 198–218 (SQLY…NLFI), 225–245 (GSVS…VEFF), and 260–280 (ISMG…MMVW). Residue arginine 143 participates in a 1,2-diacyl-sn-glycero-3-phospho-(1'-sn-glycerol) binding.

Belongs to the Lgt family.

The protein localises to the cell inner membrane. The catalysed reaction is L-cysteinyl-[prolipoprotein] + a 1,2-diacyl-sn-glycero-3-phospho-(1'-sn-glycerol) = an S-1,2-diacyl-sn-glyceryl-L-cysteinyl-[prolipoprotein] + sn-glycerol 1-phosphate + H(+). It participates in protein modification; lipoprotein biosynthesis (diacylglyceryl transfer). Functionally, catalyzes the transfer of the diacylglyceryl group from phosphatidylglycerol to the sulfhydryl group of the N-terminal cysteine of a prolipoprotein, the first step in the formation of mature lipoproteins. The sequence is that of Phosphatidylglycerol--prolipoprotein diacylglyceryl transferase from Klebsiella pneumoniae (strain 342).